The sequence spans 8799 residues: Nesprin-1 (8799 aa).

The interval Met1 to Gly289 is actin-binding. At Met1–Arg8748 the chain is on the cytoplasmic side. Calponin-homology (CH) domains are found at residues Ile27–Gln134 and Gly178–Pro283. 52 Spectrin repeats span residues Arg314–Phe397, Asp398–Lys502, Met503–Glu609, Glu610–Ala703, Asp704–Val815, Pro816–Glu923, Ala924–Ile1024, Ala1025–Asp1122, Pro1123–Glu1246, Gly1247–Ile1333, Gln1334–Val1442, Lys1443–His1548, Leu1549–Leu1651, Leu1652–Val1761, Leu1762–Cys1877, Met1878–Leu1974, Val1975–Cys2079, Cys2080–Ser2193, Leu2194–Thr2301, Ala2302–Ala2399, Arg2400–Cys2511, Val2512–Cys2617, Gln2618–Val2729, Ile2730–Leu2836, Val2837–Val2960, Thr2961–Glu3060, Gln3061–Leu3169, Lys3170–Leu3273, Asp3274–Ala3385, Leu3386–Leu3488, Val3489–Leu3591, Asn3592–Trp3718, Tyr3719–Gly3812, Leu3813–Lys3918, Val3919–Tyr4026, Arg4027–Lys4137, Ala4138–Asp4233, Leu4234–Ser4337, Val4338–Ala4449, Leu4450–Ser4558, Leu4559–Ala4667, Ile4668–Thr4774, Thr4775–Arg4880, Met4881–Ile4989, Tyr4990–Cys5097, Met5098–Ala5207, Val5208–Val5316, Lys5317–Lys5422, Ala5423–Leu5520, Asn5521–Ala5628, Ala5629–Ala5745, and Val5746–His5851. The stretch at Arg314–Ser8666 forms a coiled coil. Lys377 bears the Phosphoserine mark. Ser732 is modified (phosphoserine). The segment at Lys1288–Glu1310 is disordered. Position 2268 is a phosphothreonine (Thr2268). Ser5655 carries the phosphoserine modification. The segment at Pro5868–Val5894 is disordered. Spectrin repeat units lie at residues Leu5971–Lys6080, Leu6081–Glu6187, Arg6377–Gln6488, Ile6489–Leu6584, His6585–Trp6694, Ser6695–Lys6798, His6799–Leu6905, His6906–Leu7023, Leu7024–Ala7131, Leu7132–Leu7240, Leu7241–Gly7353, Val7354–Phe7457, Leu7458–Ile7561, Asp7562–Leu7674, Leu7675–Ala7786, Val7787–Thr7886, Leu7887–Thr8000, Trp8001–Phe8109, and Ile8110–Pro8221. Residues Asp8225 and Ser8227 each carry the phosphoserine modification. A disordered region spans residues Thr8237–Leu8287. Residues Pro8257–Leu8269 show a composition bias toward low complexity. At Thr8278 the chain carries Phosphothreonine. 3 positions are modified to phosphoserine: Ser8281, Ser8284, and Ser8308. Spectrin repeat units lie at residues Ser8332 to Asn8440, Leu8441 to Ala8550, and Leu8551 to Gln8668. At Thr8363 the chain carries Phosphothreonine. The interval Ser8673–Pro8735 is disordered. Composition is skewed to polar residues over residues Thr8682–Gln8698 and Ser8706–Lys8718. The span at Ser8721 to Pro8735 shows a compositional bias: basic and acidic residues. The KASH domain maps to Arg8740–Leu8799. A helical; Anchor for type IV membrane protein transmembrane segment spans residues Ala8749 to Met8769. Residues Ser8770 to Leu8799 lie on the Perinuclear space side of the membrane.

The protein belongs to the nesprin family. In terms of assembly, core component of LINC complexes which are composed of inner nuclear membrane SUN domain-containing proteins coupled to outer nuclear membrane KASH domain-containing nesprins. SUN and KASH domain-containing proteins seem to bind each other promiscuously; however, differentially expression of LINC complex constituents can give rise to specific assemblies. At least SUN1/2-containing core LINC complexes are proposed to be hexameric composed of three protomers of each KASH and SUN domain-containing protein. The SUN2:SYNE1/KASH1 LINC complex is a heterohexamer; the homotrimeric cloverleave-like conformation of the SUN domain is a prerequisite for LINC complex formation in which three separate SYNE1/KASH1 peptides bind at the interface of adjacent SUN domains. Self-associates. Interacts with SYNE3. Interacts with SUN3; proposed to form a spermatogenesis-specific LINC complex with SUN3 during sperm head formation. May interact with MUSK. Interacts with SPAG4/SUN4. Interacts with EMD and LMNA in vitro. Interacts with F-actin via its N-terminal domain. Interacts with DCTN1 and DYNC1I1/2; suggesting the association with the dynein-dynactin motor complex. Interacts (via KASH domain) with TMEM258. The disulfid bond with SUN1 or SUN2 is required for stability of the respective LINC complex under tensile forces. Expressed in C2F3 and CH310T1/2 cells, brain and skeletal muscle (at protein level).

The protein resides in the nucleus outer membrane. Its subcellular location is the nucleus. It localises to the nucleus envelope. The protein localises to the cytoplasm. It is found in the cytoskeleton. The protein resides in the myofibril. Its subcellular location is the sarcomere. Multi-isomeric modular protein which forms a linking network between organelles and the actin cytoskeleton to maintain the subcellular spatial organization. As a component of the LINC (LInker of Nucleoskeleton and Cytoskeleton) complex involved in the connection between the nuclear lamina and the cytoskeleton. The nucleocytoplasmic interactions established by the LINC complex play an important role in the transmission of mechanical forces across the nuclear envelope and in nuclear movement and positioning. May be involved in nucleus-centrosome attachment. During interkinetic nuclear migration (INM) at G2 phase and nuclear migration in neural progenitors its LINC complex association with SUN1/2 and probably association with cytoplasmic dynein-dynactin motor complexes functions to pull the nucleus toward the centrosome; SYNE1 and SYNE2 seem to act redundantly in cerebellum, midbrain, brain stem, and other brain regions except cerebral cortex and hippocampus. Required for centrosome migration to the apical cell surface during early ciliogenesis. May be involved in nuclear remodeling during sperm head formation in spermatogenesis; a probable SUN3:SYNE1/KASH1 LINC complex may tether spermatid nuclei to posterior cytoskeletal structures such as the manchette. The polypeptide is Nesprin-1 (Mus musculus (Mouse)).